The chain runs to 914 residues: MVSLLKKLIGSRNDRLLKQYRKLVTQINALESKTAALSDQELAAKTQEFRTRHAEGSSLDDLLPEAFAVVREAGKRVFGMRHFDVQMLGGIALHNGKIAEMRTGEGKTLMATLPVYLNAIAGRGVHVVTVNDYLARRDAEWMGRLYRFLGMSTGVVVPQQPNDEKIAAYAADITYGTNNEFGFDYLRDNMEYRVEDRRQRALAYAIVDEVDSILIDEARTPLIISGQAEDHTELYVRMNAVPPLLTRMASEPKPHEPEPEGDYWVDEKSQQVFLSERGHENAERILSQQGILPEGESLYDPRHIALMHHLMVALRANTLFFRDQQYVVQDGEVVIVDEFTGRLMVGRRWSDGLHQAVEAKEGVKIQHENQTLASITFQNYFRMYDKLSGMTGTADTEAYEFQEIYNLETVIIPTNKPMIRKDQNDQVFKTAQEKYNAILNDIRDCHERGQPVLVGTTSIENSELLSGLLKQAKLPHEVLNAKQHAREAEIVAEAGKPGHITIATNMAGRGTDIVLGGSVDKQVDLIRADESLSEAEKEARIEKVRADWKPANEQVKAAGGLRIIGTERHESRRIDNQLRGRAGRQGDPGSSRFYLSLEDPLMRIFAGDRVRGIMERLKLPEGEPIEAGMVTRSIETAQRKVEGRNFDIRKQLLEYDDVANDQRKVLYAQRNEVLEASSIRPSVEALCEGAATDLVRQHIPADSVEEQWDVPALEQALAADWQIHLSLSDMLEKESSLTDDDILERVLEAVRGVYTGKIALVGEEAWAQFERSIMLQAIDTHWREHLSALDYLRQGIHLRGYAQKNPKQEYKREAFELFSGMLDRIRDDVVRVLLTVRVQSAEQVEQAAEAEASQPHVQNVQYHHSDYDEALAGTDADAQPAQQPVRNFMPKVGRNDPCPCGSGKKYKHCHGKLA.

ATP contacts are provided by residues glutamine 86, 104 to 108 (GEGKT), and aspartate 512. Cysteine 898, cysteine 900, cysteine 909, and histidine 910 together coordinate Zn(2+).

The protein belongs to the SecA family. In terms of assembly, monomer and homodimer. Part of the essential Sec protein translocation apparatus which comprises SecA, SecYEG and auxiliary proteins SecDF-YajC and YidC. Zn(2+) serves as cofactor.

The protein localises to the cell inner membrane. It is found in the cytoplasm. The enzyme catalyses ATP + H2O + cellular proteinSide 1 = ADP + phosphate + cellular proteinSide 2.. Part of the Sec protein translocase complex. Interacts with the SecYEG preprotein conducting channel. Has a central role in coupling the hydrolysis of ATP to the transfer of proteins into and across the cell membrane, serving both as a receptor for the preprotein-SecB complex and as an ATP-driven molecular motor driving the stepwise translocation of polypeptide chains across the membrane. This is Protein translocase subunit SecA from Bordetella petrii (strain ATCC BAA-461 / DSM 12804 / CCUG 43448).